The sequence spans 291 residues: Bis(5'-nucleosyl)-tetraphosphatase, symmetrical (291 aa).

The protein belongs to the Ap4A hydrolase family.

It catalyses the reaction P(1),P(4)-bis(5'-adenosyl) tetraphosphate + H2O = 2 ADP + 2 H(+). Its function is as follows. Hydrolyzes diadenosine 5',5'''-P1,P4-tetraphosphate to yield ADP. The protein is Bis(5'-nucleosyl)-tetraphosphatase, symmetrical of Coxiella burnetii (strain CbuG_Q212) (Coxiella burnetii (strain Q212)).